The chain runs to 227 residues: Phosphoribosylformylglycinamidine synthase subunit PurQ (227 aa).

The Glutamine amidotransferase type-1 domain occupies 3–225 (FAVIVFPGSN…LKYWRETYVV (223 aa)). The active-site Nucleophile is the C86. Residues H194 and E196 contribute to the active site.

Part of the FGAM synthase complex composed of 1 PurL, 1 PurQ and 2 PurS subunits.

The protein localises to the cytoplasm. The enzyme catalyses N(2)-formyl-N(1)-(5-phospho-beta-D-ribosyl)glycinamide + L-glutamine + ATP + H2O = 2-formamido-N(1)-(5-O-phospho-beta-D-ribosyl)acetamidine + L-glutamate + ADP + phosphate + H(+). It carries out the reaction L-glutamine + H2O = L-glutamate + NH4(+). It participates in purine metabolism; IMP biosynthesis via de novo pathway; 5-amino-1-(5-phospho-D-ribosyl)imidazole from N(2)-formyl-N(1)-(5-phospho-D-ribosyl)glycinamide: step 1/2. Its function is as follows. Part of the phosphoribosylformylglycinamidine synthase complex involved in the purines biosynthetic pathway. Catalyzes the ATP-dependent conversion of formylglycinamide ribonucleotide (FGAR) and glutamine to yield formylglycinamidine ribonucleotide (FGAM) and glutamate. The FGAM synthase complex is composed of three subunits. PurQ produces an ammonia molecule by converting glutamine to glutamate. PurL transfers the ammonia molecule to FGAR to form FGAM in an ATP-dependent manner. PurS interacts with PurQ and PurL and is thought to assist in the transfer of the ammonia molecule from PurQ to PurL. The polypeptide is Phosphoribosylformylglycinamidine synthase subunit PurQ (Bacillus cytotoxicus (strain DSM 22905 / CIP 110041 / 391-98 / NVH 391-98)).